Reading from the N-terminus, the 303-residue chain is Sterol-4-alpha-carboxylate 3-dehydrogenase ERG26, decarboxylating (303 aa).

NADP(+) contacts are provided by residues 8–9 (SL) and 30–32 (TAS). Ser71 provides a ligand contact to substrate. The tract at residues 77–96 (PTQEPTSEENAHRYDENNAP) is disordered. NADP(+) contacts are provided by residues Tyr102, Lys106, and 128-131 (IPGI). Residue Tyr102 participates in substrate binding. Catalysis depends on Lys106, which acts as the Proton donor.

This sequence belongs to the 3-beta-HSD family. As to quaternary structure, heterotetramer of ERG25, ERG26, ERG27 and ERG28. ERG28 acts as a scaffold to tether ERG27 and other 4,4-demethylation-related enzymes, forming a demethylation enzyme complex, in the endoplasmic reticulum.

It is found in the endoplasmic reticulum membrane. Its pathway is steroid metabolism; ergosterol biosynthesis. Sterol-4-alpha-carboxylate 3-dehydrogenase; part of the third module of ergosterol biosynthesis pathway that includes the late steps of the pathway. ERG26 is a catalytic component of the C-4 demethylation complex that catalyzes the conversion of 4,4-dimethylfecosterol into fecosterol via 4-methylfecosterol. The third module or late pathway involves the ergosterol synthesis itself through consecutive reactions that mainly occur in the endoplasmic reticulum (ER) membrane. Firstly, the squalene synthase ERG9 catalyzes the condensation of 2 farnesyl pyrophosphate moieties to form squalene, which is the precursor of all steroids. Squalene synthase is crucial for balancing the incorporation of farnesyl diphosphate (FPP) into sterol and nonsterol isoprene synthesis. Secondly, squalene is converted into lanosterol by the consecutive action of the squalene epoxidase ERG1 and the lanosterol synthase ERG7. Then, the delta(24)-sterol C-methyltransferase ERG6 methylates lanosterol at C-24 to produce eburicol. Eburicol is the substrate of the sterol 14-alpha demethylase encoded by CYP51A, CYP51B and CYP51C, to yield 4,4,24-trimethyl ergosta-8,14,24(28)-trienol. CYP51B encodes the enzyme primarily responsible for sterol 14-alpha-demethylation, and plays an essential role in ascospore formation. CYP51A encodes an additional sterol 14-alpha-demethylase, induced on ergosterol depletion and responsible for the intrinsic variation in azole sensitivity. The third CYP51 isoform, CYP51C, does not encode a sterol 14-alpha-demethylase, but is required for full virulence on host wheat ears. The C-14 reductase ERG24 then reduces the C14=C15 double bond which leads to 4,4-dimethylfecosterol. A sequence of further demethylations at C-4, involving the C-4 demethylation complex containing the C-4 methylsterol oxidases ERG25, the sterol-4-alpha-carboxylate 3-dehydrogenase ERG26 and the 3-keto-steroid reductase ERG27, leads to the production of fecosterol via 4-methylfecosterol. ERG28 has a role as a scaffold to help anchor ERG25, ERG26 and ERG27 to the endoplasmic reticulum. The C-8 sterol isomerase ERG2 then catalyzes the reaction which results in unsaturation at C-7 in the B ring of sterols and thus converts fecosterol to episterol. The sterol-C5-desaturases ERG3A and ERG3BB then catalyze the introduction of a C-5 double bond in the B ring to produce 5-dehydroepisterol. The C-22 sterol desaturases ERG5A and ERG5B further convert 5-dehydroepisterol into ergosta-5,7,22,24(28)-tetraen-3beta-ol by forming the C-22(23) double bond in the sterol side chain. Finally, ergosta-5,7,22,24(28)-tetraen-3beta-ol is substrate of the C-24(28) sterol reductase ERG4 to produce ergosterol. In Gibberella zeae (strain ATCC MYA-4620 / CBS 123657 / FGSC 9075 / NRRL 31084 / PH-1) (Wheat head blight fungus), this protein is Sterol-4-alpha-carboxylate 3-dehydrogenase ERG26, decarboxylating.